The sequence spans 204 residues: Small ribosomal subunit protein uS4 (204 aa).

Residues 93-156 (SRLSSVLYHS…AKIPVVVEAE (64 aa)) enclose the S4 RNA-binding domain.

This sequence belongs to the universal ribosomal protein uS4 family. As to quaternary structure, part of the 30S ribosomal subunit. Contacts protein S5. The interaction surface between S4 and S5 is involved in control of translational fidelity.

In terms of biological role, one of the primary rRNA binding proteins, it binds directly to 16S rRNA where it nucleates assembly of the body of the 30S subunit. Its function is as follows. With S5 and S12 plays an important role in translational accuracy. The polypeptide is Small ribosomal subunit protein uS4 (Wolbachia pipientis wMel).